Reading from the N-terminus, the 430-residue chain is Rho GTPase-activating protein 2 (430 aa).

The interval methionine 1–glutamine 36 is disordered. Over residues lysine 9–lysine 18 the composition is skewed to gly residues. The 14-residue stretch at isoleucine 80–threonine 93 folds into the CRIB domain. One can recognise a Rho-GAP domain in the interval valine 125–threonine 310. The tract at residues glutamate 307–aspartate 372 is disordered. Positions serine 316 to aspartate 326 are enriched in low complexity. Positions glutamate 347–glutamate 356 are enriched in acidic residues. The segment covering valine 357–glutamate 371 has biased composition (basic and acidic residues).

As to quaternary structure, homodimerizes via its Rho-GAP domain and forms a tetrameric complex (2:2) with ARAC1/ROP3, ARAC2/ROP7, ARAC4/ROP2, ARAC5/ROP4, ARAC7/ROP9 or ARAC11/ROP1.

Its function is as follows. Acts as a GTPase activator for the Rac-type GTPase by converting it to an inactive GDP-bound state. This is Rho GTPase-activating protein 2 (ROPGAP2) from Arabidopsis thaliana (Mouse-ear cress).